The following is a 228-amino-acid chain: RNA chaperone ProQ (228 aa).

Residues 105–178 are disordered; that stretch reads EAKARVQAQR…REEQHTPVSD (74 aa). Composition is skewed to basic and acidic residues over residues 117 to 136 and 146 to 173; these read QQAKKREAAAAAGEKEDAPR and RRKETTPRTPRAEKPAAKAPRAPREEQH.

The protein belongs to the ProQ family.

Its subcellular location is the cytoplasm. RNA chaperone with significant RNA binding, RNA strand exchange and RNA duplexing activities. May regulate ProP activity through an RNA-based, post-transcriptional mechanism. In Citrobacter koseri (strain ATCC BAA-895 / CDC 4225-83 / SGSC4696), this protein is RNA chaperone ProQ.